The following is a 334-amino-acid chain: UDP-glucose 4-epimerase (334 aa).

Residues 11–12, 31–36, 50–51, 72–76, Asn91, Thr116, Tyr140, Lys144, and Phe168 each bind NAD(+); these read YI, DNLQKG, DI, and FAANS. Residues Thr116 and Tyr140 each coordinate substrate. Catalysis depends on Tyr140, which acts as the Proton acceptor. Residues Asn169, 188-189, 205-207, Arg220, and 281-284 contribute to the substrate site; these read HL, AIF, and RSGD.

The protein belongs to the NAD(P)-dependent epimerase/dehydratase family. In terms of assembly, homodimer. NAD(+) serves as cofactor.

It carries out the reaction UDP-alpha-D-glucose = UDP-alpha-D-galactose. The protein operates within carbohydrate metabolism; galactose metabolism. Functionally, involved in the metabolism of galactose. Catalyzes the conversion of UDP-galactose (UDP-Gal) to UDP-glucose (UDP-Glc) through a mechanism involving the transient reduction of NAD. The protein is UDP-glucose 4-epimerase (galE) of Halalkalibacterium halodurans (strain ATCC BAA-125 / DSM 18197 / FERM 7344 / JCM 9153 / C-125) (Bacillus halodurans).